Reading from the N-terminus, the 501-residue chain is Probable leucine aminopeptidase 2 (501 aa).

The first 18 residues, 1-18 (MVTMKLLYLTSFASLAVA), serve as a signal peptide directing secretion. The 98-residue stretch at 119 to 216 (SPSVNATAPL…ADGQALIQMI (98 aa)) folds into the PA domain. 2 N-linked (GlcNAc...) asparagine glycosylation sites follow: Asn123 and Asn233. Residues His257 and Asp269 each coordinate Zn(2+). Glu301 functions as the Proton acceptor in the catalytic mechanism. Glu302 is a Zn(2+) binding site. A glycan (N-linked (GlcNAc...) asparagine) is linked at Asn316. Asp330 serves as a coordination point for Zn(2+). Asn350 is a glycosylation site (N-linked (GlcNAc...) asparagine). Residue His428 coordinates Zn(2+). N-linked (GlcNAc...) asparagine glycans are attached at residues Asn433 and Asn467. Residues 480-501 (AMKRTPHTHTGGTGCYKDRVEQ) form a disordered region.

It belongs to the peptidase M28 family. M28A subfamily. As to quaternary structure, monomer. Requires Zn(2+) as cofactor.

The protein localises to the secreted. Functionally, extracellular aminopeptidase that releases a wide variety of amino acids from natural peptides and contributes to pathogenicity. The chain is Probable leucine aminopeptidase 2 (lap2) from Aspergillus fumigatus (strain ATCC MYA-4609 / CBS 101355 / FGSC A1100 / Af293) (Neosartorya fumigata).